A 132-amino-acid chain; its full sequence is NADH-quinone oxidoreductase subunit A (132 aa).

A run of 3 helical transmembrane segments spans residues 7 to 27 (YWVL…MIGV), 62 to 82 (FYLI…LYAW), and 91 to 111 (WTGY…LAYL).

It belongs to the complex I subunit 3 family. As to quaternary structure, NDH-1 is composed of 14 different subunits. Subunits NuoA, H, J, K, L, M, N constitute the membrane sector of the complex.

It is found in the cell inner membrane. It catalyses the reaction a quinone + NADH + 5 H(+)(in) = a quinol + NAD(+) + 4 H(+)(out). NDH-1 shuttles electrons from NADH, via FMN and iron-sulfur (Fe-S) centers, to quinones in the respiratory chain. The immediate electron acceptor for the enzyme in this species is believed to be ubiquinone. Couples the redox reaction to proton translocation (for every two electrons transferred, four hydrogen ions are translocated across the cytoplasmic membrane), and thus conserves the redox energy in a proton gradient. This chain is NADH-quinone oxidoreductase subunit A, found in Acidiphilium cryptum (strain JF-5).